The chain runs to 257 residues: ABC transporter ATP-binding protein YxdL (257 aa).

Residues leucine 5–serine 243 enclose the ABC transporter domain. Glycine 40–threonine 47 contacts ATP.

It belongs to the ABC transporter superfamily. In terms of assembly, the complex is composed of two ATP-binding proteins (YxdL) and two transmembrane proteins (YxdM).

Part of the ABC transporter complex YxdLM which could be involved in peptide resistance. Responsible for energy coupling to the transport system. The chain is ABC transporter ATP-binding protein YxdL (yxdL) from Bacillus subtilis (strain 168).